A 349-amino-acid polypeptide reads, in one-letter code: Oxygen-dependent coproporphyrinogen-III oxidase (349 aa).

Disordered regions lie at residues 1–21 and 37–60; these read MGASENLGQGPPPPHSRKRAR and SLDGGQSFRTDSWERPEGGGGRSK. Residue S105 coordinates substrate. 2 residues coordinate a divalent metal cation: H109 and H119. H119 acts as the Proton donor in catalysis. 121–123 contributes to the substrate binding site; sequence NYR. Residues H153 and H183 each contribute to the a divalent metal cation site. The segment at 273-308 is important for dimerization; that stretch reads YAEFNLVWDRGTIFGLQTNGRTESILMSLPPLARWE.

This sequence belongs to the aerobic coproporphyrinogen-III oxidase family. As to quaternary structure, homodimer. It depends on a divalent metal cation as a cofactor.

Its subcellular location is the cytoplasm. It carries out the reaction coproporphyrinogen III + O2 + 2 H(+) = protoporphyrinogen IX + 2 CO2 + 2 H2O. The protein operates within porphyrin-containing compound metabolism; protoporphyrin-IX biosynthesis; protoporphyrinogen-IX from coproporphyrinogen-III (O2 route): step 1/1. Functionally, involved in the heme and chlorophyll biosynthesis. Catalyzes the aerobic oxidative decarboxylation of propionate groups of rings A and B of coproporphyrinogen-III to yield the vinyl groups in protoporphyrinogen-IX. This is Oxygen-dependent coproporphyrinogen-III oxidase from Prochlorococcus marinus (strain MIT 9313).